A 308-amino-acid chain; its full sequence is Acetylglutamate kinase (308 aa).

Residues 86–87, Arg108, and Asn201 each bind substrate; that span reads GG.

The protein belongs to the acetylglutamate kinase family. ArgB subfamily.

The protein resides in the cytoplasm. It carries out the reaction N-acetyl-L-glutamate + ATP = N-acetyl-L-glutamyl 5-phosphate + ADP. Its pathway is amino-acid biosynthesis; L-arginine biosynthesis; N(2)-acetyl-L-ornithine from L-glutamate: step 2/4. Functionally, catalyzes the ATP-dependent phosphorylation of N-acetyl-L-glutamate. The sequence is that of Acetylglutamate kinase from Prochlorococcus marinus (strain MIT 9303).